Here is a 214-residue protein sequence, read N- to C-terminus: MRTNNMRGKFIVLEGLEGAGKTTAHQIILTQLKQAGIQQIVQTREPGGTPLAEKLRYLIKHEFEEPISPQAELLMLYAARAQLVENVIKPALSAGKWVLGDRHDMSSQAYQGGGRQLDVALLNSLKESVLGPFEPDLTIYLDIDPAIGLARASGCGELDRIEQQSLDFFYRTRERYLALTQHNEKAVIINAEQPLEKVTNDIQQAVQKFLTFAQ.

An ATP-binding site is contributed by 15 to 22; the sequence is GLEGAGKT.

Belongs to the thymidylate kinase family.

The enzyme catalyses dTMP + ATP = dTDP + ADP. Functionally, phosphorylation of dTMP to form dTDP in both de novo and salvage pathways of dTTP synthesis. The polypeptide is Thymidylate kinase (Haemophilus ducreyi (strain 35000HP / ATCC 700724)).